The sequence spans 834 residues: MDIDYENEISIVLEAKHNQHLNNNNNGCGNANNINNENNFLQDDLVYNFLSDEVTLGSDCTTPYTLNNNHIVNSNYIINNNNNNNNMLNDHSSSPMRVPNSSPSLYNNSIESPELVYHDNSNNNNNNNNNINVNDINVNDINSNSTNNNESNNNSSSEGELPCLVDIQQYQYQDMLPFDQQPVVVMQNPIITTTTTTTTTTATIEQQINPSEQQQQQQQQQQQQQQQQQQQQQQQQQHQHLLQEHQHVVNEEVLHMIDPSVDLTNTYMDAAGISDIIASDSSTTTSPSSPSTSNMFLTPMVTTTTTSETSSSSDSSVNIIPNNTNTITNILIKEEDTNNGNNNKKSKKRTIDSRVQNIVHPLTREELLKIAGKEPVQVVDPPTHNQEDERNVKKQRRLIKNRESAQLSRMRKKIYIEDLEKTISDLTQDNSSLKEEVLYLQGLVKQLAAQNSNSNNNSVIDINNNNVNNSQQQQQQHQQQQQLNNSNNNNNNNNNNSTNKQQQSKNVKAAGVCLLLIFFSLGVFFQPPQSSTQRFGAITSFDVKPTHSILSMSDSESSPQKSLRLSSNHHSLPDGTFNTIPIDQQTTATTNTKSLPSYVLNNNDDSDSDYENVNINNNNNNNNNNNNNNNNNNNNNNNNNNNNNNNNNNNNIKRKQHQQNPQSDSFQNRKKIKINLATENTEGDGPLVSKSSATTTTTTTTTTTTSTPKTPQISEDVSIDEIEEPMVHSSQQYIVCSDSPRIVSNNITQTTESLLNSNSTNPITIGLLLPAESLNLHNIVNNIGGGERSILEISCQVSNIRVWNPLSIDIDHQSSIVPASSSSSSASSIFTNHF.

Residues 83–160 form a disordered region; it reads NNNNMLNDHS…SNNNSSSEGE (78 aa). Positions 90–111 are enriched in polar residues; that stretch reads DHSSSPMRVPNSSPSLYNNSIE. The span at 119–157 shows a compositional bias: low complexity; sequence DNSNNNNNNNNNINVNDINVNDINSNSTNNNESNNNSSS. Residues 211–246 adopt a coiled-coil conformation; that stretch reads SEQQQQQQQQQQQQQQQQQQQQQQQQQHQHLLQEHQ. A disordered region spans residues 378–405; that stretch reads VVDPPTHNQEDERNVKKQRRLIKNRESA. The 64-residue stretch at 391–454 folds into the bZIP domain; sequence NVKKQRRLIK…KQLAAQNSNS (64 aa). The tract at residues 393–402 is basic motif; that stretch reads KKQRRLIKNR. The interval 407-414 is leucine-zipper; the sequence is LSRMRKKI. Disordered stretches follow at residues 455–504 and 550–712; these read NNNS…QQQS and LSMS…KTPQ. The segment covering 550-595 has biased composition (polar residues); that stretch reads LSMSDSESSPQKSLRLSSNHHSLPDGTFNTIPIDQQTTATTNTKSL. Low complexity-rich tracts occupy residues 616–651 and 694–707; these read NNNN…NNNN and TTTT…TTST.

Belongs to the bZIP family.

It localises to the nucleus. In terms of biological role, probable transcriptional regulator. The protein is Probable basic-leucine zipper transcription factor D (bzpD) of Dictyostelium discoideum (Social amoeba).